The primary structure comprises 280 residues: Large ribosomal subunit protein uL2 (280 aa).

A disordered region spans residues 213–280 (RWKGKRPSVR…RRRTGKKHAR (68 aa)). Residues 268-280 (IVRRRRTGKKHAR) are compositionally biased toward basic residues.

It belongs to the universal ribosomal protein uL2 family. In terms of assembly, part of the 50S ribosomal subunit. Forms a bridge to the 30S subunit in the 70S ribosome.

Functionally, one of the primary rRNA binding proteins. Required for association of the 30S and 50S subunits to form the 70S ribosome, for tRNA binding and peptide bond formation. It has been suggested to have peptidyltransferase activity; this is somewhat controversial. Makes several contacts with the 16S rRNA in the 70S ribosome. This chain is Large ribosomal subunit protein uL2, found in Mycobacterium leprae (strain Br4923).